The following is a 286-amino-acid chain: Phosphatidylserine decarboxylase proenzyme (286 aa).

Active-site charge relay system; for autoendoproteolytic cleavage activity residues include aspartate 90, histidine 147, and serine 250. Serine 250 functions as the Schiff-base intermediate with substrate; via pyruvic acid; for decarboxylase activity in the catalytic mechanism. A Pyruvic acid (Ser); by autocatalysis modification is found at serine 250.

The protein belongs to the phosphatidylserine decarboxylase family. PSD-B subfamily. Prokaryotic type I sub-subfamily. As to quaternary structure, heterodimer of a large membrane-associated beta subunit and a small pyruvoyl-containing alpha subunit. It depends on pyruvate as a cofactor. Is synthesized initially as an inactive proenzyme. Formation of the active enzyme involves a self-maturation process in which the active site pyruvoyl group is generated from an internal serine residue via an autocatalytic post-translational modification. Two non-identical subunits are generated from the proenzyme in this reaction, and the pyruvate is formed at the N-terminus of the alpha chain, which is derived from the carboxyl end of the proenzyme. The autoendoproteolytic cleavage occurs by a canonical serine protease mechanism, in which the side chain hydroxyl group of the serine supplies its oxygen atom to form the C-terminus of the beta chain, while the remainder of the serine residue undergoes an oxidative deamination to produce ammonia and the pyruvoyl prosthetic group on the alpha chain. During this reaction, the Ser that is part of the protease active site of the proenzyme becomes the pyruvoyl prosthetic group, which constitutes an essential element of the active site of the mature decarboxylase.

The protein localises to the cell membrane. It carries out the reaction a 1,2-diacyl-sn-glycero-3-phospho-L-serine + H(+) = a 1,2-diacyl-sn-glycero-3-phosphoethanolamine + CO2. It functions in the pathway phospholipid metabolism; phosphatidylethanolamine biosynthesis; phosphatidylethanolamine from CDP-diacylglycerol: step 2/2. In terms of biological role, catalyzes the formation of phosphatidylethanolamine (PtdEtn) from phosphatidylserine (PtdSer). The protein is Phosphatidylserine decarboxylase proenzyme of Saccharophagus degradans (strain 2-40 / ATCC 43961 / DSM 17024).